Reading from the N-terminus, the 279-residue chain is MTNNDAAVEAAGSSRASSSKQQLKLEITEKVRVLCLHGYRQNGEAFKNKLGSFRKFANKYAEFVFITAPHVAKALESAAEPVPEQRSWWANKDDGSFKGTNKGGPAFGFQESLRCVEEAWRTQGPFQGLLGFSQGACFVGLICGLAKKKLTSIRPEFAVLASGFLSGSLVHMSAYEEAISIPTLHIYGQTDEIIPKEMSESLAARFKNAEVLEHSGGHYFPATAQQKQTFINFFQDRLQEYLEHEELQQSGNASFVDSGAEDDNDAEVAAMTAELDESD.

Catalysis depends on charge relay system residues serine 133, aspartate 191, and histidine 218. Residues glutamine 249–aspartate 279 form a disordered region.

Belongs to the LovG family.

This chain is Esterase CG5412, found in Drosophila melanogaster (Fruit fly).